The following is a 557-amino-acid chain: Dihydroxy-acid dehydratase (557 aa).

Aspartate 78 contributes to the Mg(2+) binding site. Cysteine 119 provides a ligand contact to [2Fe-2S] cluster. Residues aspartate 120 and lysine 121 each coordinate Mg(2+). Lysine 121 is modified (N6-carboxylysine). A [2Fe-2S] cluster-binding site is contributed by cysteine 192. Glutamate 442 lines the Mg(2+) pocket. Residue serine 468 is the Proton acceptor of the active site.

It belongs to the IlvD/Edd family. In terms of assembly, homodimer. It depends on [2Fe-2S] cluster as a cofactor. The cofactor is Mg(2+).

The enzyme catalyses (2R)-2,3-dihydroxy-3-methylbutanoate = 3-methyl-2-oxobutanoate + H2O. The catalysed reaction is (2R,3R)-2,3-dihydroxy-3-methylpentanoate = (S)-3-methyl-2-oxopentanoate + H2O. The protein operates within amino-acid biosynthesis; L-isoleucine biosynthesis; L-isoleucine from 2-oxobutanoate: step 3/4. Its pathway is amino-acid biosynthesis; L-valine biosynthesis; L-valine from pyruvate: step 3/4. Its function is as follows. Functions in the biosynthesis of branched-chain amino acids. Catalyzes the dehydration of (2R,3R)-2,3-dihydroxy-3-methylpentanoate (2,3-dihydroxy-3-methylvalerate) into 2-oxo-3-methylpentanoate (2-oxo-3-methylvalerate) and of (2R)-2,3-dihydroxy-3-methylbutanoate (2,3-dihydroxyisovalerate) into 2-oxo-3-methylbutanoate (2-oxoisovalerate), the penultimate precursor to L-isoleucine and L-valine, respectively. This chain is Dihydroxy-acid dehydratase, found in Bacillus cereus (strain AH187).